The chain runs to 482 residues: Anaerobic nitric oxide reductase flavorubredoxin (482 aa).

A zinc metallo-hydrolase region spans residues L30–I210. Positions 79, 81, 83, 147, 166, and 227 each coordinate Fe cation. Positions I254–A393 constitute a Flavodoxin-like domain. Residues T260 to N264 and A342 to L369 each bind FMN. The 52-residue stretch at G426 to L477 folds into the Rubredoxin-like domain. Fe cation is bound by residues C431, C434, C464, and C467.

This sequence in the N-terminal section; belongs to the zinc metallo-hydrolase group 3 family. In terms of assembly, homotetramer. Fe cation serves as cofactor. FMN is required as a cofactor.

The protein resides in the cytoplasm. The protein operates within nitrogen metabolism; nitric oxide reduction. Functionally, anaerobic nitric oxide reductase; uses NADH to detoxify nitric oxide (NO), protecting several 4Fe-4S NO-sensitive enzymes. Has at least 2 reductase partners, only one of which (NorW, flavorubredoxin reductase) has been identified. NO probably binds to the di-iron center; electrons enter from the NorW at rubredoxin and are transferred sequentially to the FMN center and the di-iron center. Also able to function as an aerobic oxygen reductase. This chain is Anaerobic nitric oxide reductase flavorubredoxin, found in Citrobacter koseri (strain ATCC BAA-895 / CDC 4225-83 / SGSC4696).